Consider the following 240-residue polypeptide: MARAAPPALLLPLLGLAAATAAAAAAAAAVGCPSSTWVQFQDSCYIFLQEAIKVESIEDVRNQCTDHGADMVSIHNEEENTFILETLKKQWKGPDDILLGMFFDTDDASFKWFDKSNMTFDKWSDQEDGEDLVDTCAFLHTKTGEWKKGNCEVSSVEGTLCKAAIPYEKKYLSDNHILISALVIASTVILTVLGAVIWFLYKRNLDSGFTTVFSTAPQSPFNDDCVLVVAEENEYAVQFD.

In terms of domain architecture, C-type lectin spans 40-160 (FQDSCYIFLQ…CEVSSVEGTL (121 aa)). Residue asparagine 117 is glycosylated (N-linked (GlcNAc...) asparagine). Cysteine 136 and cysteine 151 are joined by a disulfide. A helical membrane pass occupies residues 177-197 (ILISALVIASTVILTVLGAVI). Topologically, residues 198–240 (WFLYKRNLDSGFTTVFSTAPQSPFNDDCVLVVAEENEYAVQFD) are cytoplasmic.

The protein localises to the membrane. The protein resides in the cell projection. It is found in the filopodium. Its subcellular location is the cytoplasm. It localises to the cell cortex. In terms of biological role, potential multifunctional C-type lectin receptor that may play roles in endocytosis and phagocytosis as well as in cell adhesion and migration. In Sus scrofa (Pig), this protein is CD302 antigen.